Reading from the N-terminus, the 189-residue chain is Apolipoprotein D (189 aa).

A signal peptide spans Met-1–Gly-21. Gln-22 bears the Pyrrolidone carboxylic acid mark. 2 disulfide bridges follow: Cys-29–Cys-135 and Cys-62–Cys-186. N-linked (GlcNAc...) asparagine glycans are attached at residues Asn-66 and Asn-99.

This sequence belongs to the calycin superfamily. Lipocalin family. In terms of assembly, homodimer. Most heavily expressed in adrenal gland, lung, brain, testis and spleen.

It localises to the secreted. APOD occurs in the macromolecular complex with lecithin-transport and binding of bilin. Appears to be able to transport a variety of ligands in a number of different contexts. The polypeptide is Apolipoprotein D (APOD) (Oryctolagus cuniculus (Rabbit)).